The chain runs to 503 residues: ATP synthase subunit alpha (503 aa).

Residue Gly170–Thr177 coordinates ATP.

Belongs to the ATPase alpha/beta chains family. As to quaternary structure, F-type ATPases have 2 components, CF(1) - the catalytic core - and CF(0) - the membrane proton channel. CF(1) has five subunits: alpha(3), beta(3), gamma(1), delta(1), epsilon(1). CF(0) has three main subunits: a(1), b(2) and c(9-12). The alpha and beta chains form an alternating ring which encloses part of the gamma chain. CF(1) is attached to CF(0) by a central stalk formed by the gamma and epsilon chains, while a peripheral stalk is formed by the delta and b chains.

Its subcellular location is the cell inner membrane. The enzyme catalyses ATP + H2O + 4 H(+)(in) = ADP + phosphate + 5 H(+)(out). Its function is as follows. Produces ATP from ADP in the presence of a proton gradient across the membrane. The alpha chain is a regulatory subunit. The chain is ATP synthase subunit alpha from Helicobacter pylori (strain J99 / ATCC 700824) (Campylobacter pylori J99).